A 158-amino-acid chain; its full sequence is Endoribonuclease YbeY (158 aa).

Zn(2+)-binding residues include histidine 117, histidine 121, and histidine 127.

Belongs to the endoribonuclease YbeY family. Zn(2+) is required as a cofactor.

The protein localises to the cytoplasm. Functionally, single strand-specific metallo-endoribonuclease involved in late-stage 70S ribosome quality control and in maturation of the 3' terminus of the 16S rRNA. This is Endoribonuclease YbeY from Francisella philomiragia subsp. philomiragia (strain ATCC 25017 / CCUG 19701 / FSC 153 / O#319-036).